Here is a 91-residue protein sequence, read N- to C-terminus: Small ribosomal subunit protein bS20 (91 aa).

It belongs to the bacterial ribosomal protein bS20 family.

Functionally, binds directly to 16S ribosomal RNA. This is Small ribosomal subunit protein bS20 from Acidithiobacillus ferrooxidans (strain ATCC 23270 / DSM 14882 / CIP 104768 / NCIMB 8455) (Ferrobacillus ferrooxidans (strain ATCC 23270)).